Here is a 491-residue protein sequence, read N- to C-terminus: Glycogen synthase 1 (491 aa).

Lys-15 lines the ADP-alpha-D-glucose pocket.

Belongs to the glycosyltransferase 1 family. Bacterial/plant glycogen synthase subfamily.

The catalysed reaction is [(1-&gt;4)-alpha-D-glucosyl](n) + ADP-alpha-D-glucose = [(1-&gt;4)-alpha-D-glucosyl](n+1) + ADP + H(+). It participates in glycan biosynthesis; glycogen biosynthesis. Synthesizes alpha-1,4-glucan chains using ADP-glucose. The sequence is that of Glycogen synthase 1 from Synechococcus sp. (strain JA-2-3B'a(2-13)) (Cyanobacteria bacterium Yellowstone B-Prime).